The chain runs to 118 residues: Large ribosomal subunit protein uL24 (118 aa).

The tract at residues 1 to 24 (MSEQPHKQRTRTKRASLHEKQDQV) is disordered.

This sequence belongs to the universal ribosomal protein uL24 family. As to quaternary structure, part of the 50S ribosomal subunit.

In terms of biological role, one of two assembly initiator proteins, it binds directly to the 5'-end of the 23S rRNA, where it nucleates assembly of the 50S subunit. Functionally, located at the polypeptide exit tunnel on the outside of the subunit. This chain is Large ribosomal subunit protein uL24, found in Halobacterium salinarum (strain ATCC 700922 / JCM 11081 / NRC-1) (Halobacterium halobium).